The following is a 543-amino-acid chain: CTP synthase (543 aa).

The tract at residues 1–265 (MTRFVFITGG…DQEVLRYFDL (265 aa)) is amidoligase domain. Ser-13 lines the CTP pocket. Ser-13 contacts UTP. Residue 14-19 (SLGKGI) participates in ATP binding. Tyr-54 contacts L-glutamine. Asp-71 provides a ligand contact to ATP. Mg(2+) contacts are provided by Asp-71 and Glu-139. CTP is bound by residues 146 to 148 (DIE), 186 to 191 (KTKPTQ), and Lys-222. UTP is bound by residues 186 to 191 (KTKPTQ) and Lys-222. The region spanning 291–542 (RVAIVGKYTA…IAAAVKEAHR (252 aa)) is the Glutamine amidotransferase type-1 domain. Gly-354 contributes to the L-glutamine binding site. Cys-381 acts as the Nucleophile; for glutamine hydrolysis in catalysis. Residues 382-385 (FGMQ), Glu-405, and Arg-470 contribute to the L-glutamine site. Catalysis depends on residues His-515 and Glu-517.

The protein belongs to the CTP synthase family. As to quaternary structure, homotetramer.

The enzyme catalyses UTP + L-glutamine + ATP + H2O = CTP + L-glutamate + ADP + phosphate + 2 H(+). It catalyses the reaction L-glutamine + H2O = L-glutamate + NH4(+). It carries out the reaction UTP + NH4(+) + ATP = CTP + ADP + phosphate + 2 H(+). It functions in the pathway pyrimidine metabolism; CTP biosynthesis via de novo pathway; CTP from UDP: step 2/2. With respect to regulation, allosterically activated by GTP, when glutamine is the substrate; GTP has no effect on the reaction when ammonia is the substrate. The allosteric effector GTP functions by stabilizing the protein conformation that binds the tetrahedral intermediate(s) formed during glutamine hydrolysis. Inhibited by the product CTP, via allosteric rather than competitive inhibition. Catalyzes the ATP-dependent amination of UTP to CTP with either L-glutamine or ammonia as the source of nitrogen. Regulates intracellular CTP levels through interactions with the four ribonucleotide triphosphates. The polypeptide is CTP synthase (Gluconobacter oxydans (strain 621H) (Gluconobacter suboxydans)).